We begin with the raw amino-acid sequence, 60 residues long: Metallothionein B (60 aa).

The tract at residues 1–28 is beta; the sequence is MDPCECSKSGTCNCGGSCTCTNCSCTSC. Cys-4, Cys-6, Cys-12, Cys-14, Cys-18, Cys-20, Cys-23, Cys-25, Cys-28, Cys-32, Cys-33, Cys-35, Cys-36, Cys-40, Cys-43, Cys-47, Cys-49, Cys-54, Cys-58, and Cys-59 together coordinate a divalent metal cation. The tract at residues 29–60 is alpha; the sequence is KKSCCPCCPSGCTKCASGCVCKGKTCDTSCCQ.

The protein belongs to the metallothionein superfamily. Type 1 family.

Its function is as follows. Metallothioneins have a high content of cysteine residues that bind various heavy metals. This is Metallothionein B (mtb) from Trematomus bernacchii (Emerald rockcod).